The sequence spans 309 residues: Transaldolase (309 aa).

K125 acts as the Schiff-base intermediate with substrate in catalysis.

It belongs to the transaldolase family. Type 1 subfamily. As to quaternary structure, homodimer.

The protein localises to the cytoplasm. It carries out the reaction D-sedoheptulose 7-phosphate + D-glyceraldehyde 3-phosphate = D-erythrose 4-phosphate + beta-D-fructose 6-phosphate. Its pathway is carbohydrate degradation; pentose phosphate pathway; D-glyceraldehyde 3-phosphate and beta-D-fructose 6-phosphate from D-ribose 5-phosphate and D-xylulose 5-phosphate (non-oxidative stage): step 2/3. Transaldolase is important for the balance of metabolites in the pentose-phosphate pathway. The sequence is that of Transaldolase from Pseudomonas syringae pv. tomato (strain ATCC BAA-871 / DC3000).